We begin with the raw amino-acid sequence, 351 residues long: Phosphoribosylformylglycinamidine cyclo-ligase (351 aa).

Belongs to the AIR synthase family.

The protein localises to the cytoplasm. The enzyme catalyses 2-formamido-N(1)-(5-O-phospho-beta-D-ribosyl)acetamidine + ATP = 5-amino-1-(5-phospho-beta-D-ribosyl)imidazole + ADP + phosphate + H(+). The protein operates within purine metabolism; IMP biosynthesis via de novo pathway; 5-amino-1-(5-phospho-D-ribosyl)imidazole from N(2)-formyl-N(1)-(5-phospho-D-ribosyl)glycinamide: step 2/2. The protein is Phosphoribosylformylglycinamidine cyclo-ligase of Burkholderia pseudomallei (strain 1710b).